A 285-amino-acid polypeptide reads, in one-letter code: MCDAQDWFTESYPDNGSALSLKIRAKLHEEQTPFQRIEIYDTESFGKLMVIDGCTMVSDRDNFLYHEMMTHPVLYTHPAPKTVWIIGGGDCGSLREVLKHSEVEKAVQIDIDERVTRLAERYFPELCEANGDPRAELLFIDGIQWVKEAPDGCVDVIIVDSTDPVGPAEGLFNEAFFRQCHRCLRTDGILVQQSESPLFHLPLIASMHRIMRQAGFAQTRTLFFPQFIYPSGWWSATMAGKGDLNRFRADAAEAKLFPTRYYNADIHRAAFAVPEFFGDALRELV.

Residues Gln5–Lys241 enclose the PABS domain. Gln35 serves as a coordination point for S-methyl-5'-thioadenosine. Spermidine-binding residues include His66 and Asp90. S-methyl-5'-thioadenosine is bound by residues Asp110 and Asp141 to Gly142. The active-site Proton acceptor is the Asp160. A spermidine-binding site is contributed by Asp160 to Asp163. Pro167 contacts S-methyl-5'-thioadenosine.

It belongs to the spermidine/spermine synthase family. Homodimer or homotetramer.

It localises to the cytoplasm. It carries out the reaction S-adenosyl 3-(methylsulfanyl)propylamine + putrescine = S-methyl-5'-thioadenosine + spermidine + H(+). It participates in amine and polyamine biosynthesis; spermidine biosynthesis; spermidine from putrescine: step 1/1. Catalyzes the irreversible transfer of a propylamine group from the amino donor S-adenosylmethioninamine (decarboxy-AdoMet) to putrescine (1,4-diaminobutane) to yield spermidine. The chain is Polyamine aminopropyltransferase from Methylococcus capsulatus (strain ATCC 33009 / NCIMB 11132 / Bath).